Reading from the N-terminus, the 397-residue chain is Argininosuccinate synthase (397 aa).

Ala-7 to Thr-15 provides a ligand contact to ATP. Tyr-84 is a binding site for L-citrulline. Gly-114 lines the ATP pocket. Residues Thr-116, Asn-120, and Asp-121 each coordinate L-aspartate. Asn-120 is an L-citrulline binding site. L-citrulline-binding residues include Arg-124, Ser-170, Ser-179, Glu-254, and Tyr-266.

Belongs to the argininosuccinate synthase family. Type 1 subfamily. Homotetramer.

Its subcellular location is the cytoplasm. The catalysed reaction is L-citrulline + L-aspartate + ATP = 2-(N(omega)-L-arginino)succinate + AMP + diphosphate + H(+). Its pathway is amino-acid biosynthesis; L-arginine biosynthesis; L-arginine from L-ornithine and carbamoyl phosphate: step 2/3. This Haloquadratum walsbyi (strain DSM 16790 / HBSQ001) protein is Argininosuccinate synthase.